Consider the following 227-residue polypeptide: Isopentenyl-diphosphate Delta-isomerase 1 (227 aa).

Position 36 (Lys-36) interacts with substrate. Mg(2+) contacts are provided by His-40 and His-51. The region spanning Leu-49–Ile-199 is the Nudix hydrolase domain. Substrate is bound by residues Arg-70 and Lys-74. The active site involves Cys-86. Position 87 (Ser-87) interacts with substrate. Glu-146 and Glu-148 together coordinate Mg(2+). Glu-148 is a catalytic residue. An N6-acetyllysine modification is found at Lys-176. The Microbody targeting signal motif lies at Tyr-225 to Ile-227.

Belongs to the IPP isomerase type 1 family. In terms of assembly, monomer. The cofactor is Mg(2+).

The protein localises to the peroxisome. The catalysed reaction is isopentenyl diphosphate = dimethylallyl diphosphate. The protein operates within isoprenoid biosynthesis; dimethylallyl diphosphate biosynthesis; dimethylallyl diphosphate from isopentenyl diphosphate: step 1/1. Its function is as follows. Catalyzes the 1,3-allylic rearrangement of the homoallylic substrate isopentenyl (IPP) to its highly electrophilic allylic isomer, dimethylallyl diphosphate (DMAPP). The sequence is that of Isopentenyl-diphosphate Delta-isomerase 1 (IDI1) from Pongo abelii (Sumatran orangutan).